We begin with the raw amino-acid sequence, 418 residues long: Fumarylacetoacetase (418 aa).

D127 provides a ligand contact to Ca(2+). Catalysis depends on H134, which acts as the Proton acceptor. Residues E200, E202, and D235 each contribute to the Ca(2+) site. Mg(2+)-binding residues include D235, K255, and T259.

Belongs to the FAH family. Ca(2+) is required as a cofactor. Requires Mg(2+) as cofactor. Highly expressed in the intestine and the hypodermis.

The enzyme catalyses 4-fumarylacetoacetate + H2O = acetoacetate + fumarate + H(+). It participates in amino-acid degradation; L-phenylalanine degradation; acetoacetate and fumarate from L-phenylalanine: step 6/6. Fumarylacetoacetase involved in the tyrosine degradation pathway. This is Fumarylacetoacetase from Caenorhabditis elegans.